We begin with the raw amino-acid sequence, 310 residues long: Olfactory receptor 4D1 (310 aa).

Over 1 to 25 (MEPQNTTQVSMFVLLGFSQTQELQK) the chain is Extracellular. Asparagine 5 is a glycosylation site (N-linked (GlcNAc...) asparagine). The chain crosses the membrane as a helical span at residues 26 to 49 (FLFLLFLLVYVTTIVGNLLIMVTV). Residues 50 to 57 (TFDCRLHT) lie on the Cytoplasmic side of the membrane. The chain crosses the membrane as a helical span at residues 58–79 (PMYFLLRNLALIDLCYSTVTSP). At 80–100 (KMLVDFLHETKTISYQGCMAQ) the chain is on the extracellular side. Cysteine 97 and cysteine 189 form a disulfide bridge. A helical membrane pass occupies residues 101-120 (IFFFHLLGGGTVFFLSVMAY). Residues 121–139 (DRYIAISQPLRYVTIMNTQ) are Cytoplasmic-facing. Residues 140-158 (LCVGLVVAAWVGGFVHSIV) traverse the membrane as a helical segment. At 159–195 (QLALILPLPFCGPNILDNFYCDVPQVLRLACTDTSLL) the chain is on the extracellular side. Residues 196–219 (EFLMISNSGLLVIIWFLLLLISYT) form a helical membrane-spanning segment. Residues 220–235 (VILVMLRSHSGKARRK) are Cytoplasmic-facing. Residues 236–258 (AASTCTTHIIVVSMIFIPCIYIY) traverse the membrane as a helical segment. The Extracellular portion of the chain corresponds to 259–269 (TWPFTPFLMDK). Residues 270 to 289 (AVSISYTVMTPMLNPMIYTL) form a helical membrane-spanning segment. Topologically, residues 290-310 (RNQDMKAAMRRLGKCLVICRE) are cytoplasmic.

It belongs to the G-protein coupled receptor 1 family.

The protein resides in the cell membrane. Functionally, odorant receptor. The protein is Olfactory receptor 4D1 (OR4D1) of Homo sapiens (Human).